A 320-amino-acid chain; its full sequence is MGTPFKMERGVKYRDAAKTSIIKVTNIDPDRELLQKPSWMKIKLPASSAKIDSIKNGMRRHGLHSVCEEASCPNLHECFNHGTATFMILGAICTRRCPFCDVAHGKPLPPDPEEPRKLAETIQDMKLKYVVITSVDRDDLPDRGAGHFADCVREIRALNPEIKIEILVPDFRGRIELALEKLKNNPPDVFNHNLENIPRLYREIRPGADYEWSLKLLREFKAMFPHIPTKSGLMVGLGENNEEILQVMRDLRTNGVTMLTLGQYLQPSRYHLPVARYVSPEEFDEFREKAAEMGFEHAACGPFVRSSYHADLQASGGLVK.

C67, C72, C78, C93, C97, C100, and S307 together coordinate [4Fe-4S] cluster. Residues 79 to 296 (FNHGTATFMI…REKAAEMGFE (218 aa)) enclose the Radical SAM core domain.

Belongs to the radical SAM superfamily. Lipoyl synthase family. [4Fe-4S] cluster serves as cofactor.

It is found in the cytoplasm. It carries out the reaction [[Fe-S] cluster scaffold protein carrying a second [4Fe-4S](2+) cluster] + N(6)-octanoyl-L-lysyl-[protein] + 2 oxidized [2Fe-2S]-[ferredoxin] + 2 S-adenosyl-L-methionine + 4 H(+) = [[Fe-S] cluster scaffold protein] + N(6)-[(R)-dihydrolipoyl]-L-lysyl-[protein] + 4 Fe(3+) + 2 hydrogen sulfide + 2 5'-deoxyadenosine + 2 L-methionine + 2 reduced [2Fe-2S]-[ferredoxin]. Its pathway is protein modification; protein lipoylation via endogenous pathway; protein N(6)-(lipoyl)lysine from octanoyl-[acyl-carrier-protein]: step 2/2. Its function is as follows. Catalyzes the radical-mediated insertion of two sulfur atoms into the C-6 and C-8 positions of the octanoyl moiety bound to the lipoyl domains of lipoate-dependent enzymes, thereby converting the octanoylated domains into lipoylated derivatives. This chain is Lipoyl synthase, found in Actinobacillus succinogenes (strain ATCC 55618 / DSM 22257 / CCUG 43843 / 130Z).